The sequence spans 88 residues: Small ribosomal subunit protein bS18 (88 aa).

It belongs to the bacterial ribosomal protein bS18 family. As to quaternary structure, part of the 30S ribosomal subunit. Forms a tight heterodimer with protein bS6.

Binds as a heterodimer with protein bS6 to the central domain of the 16S rRNA, where it helps stabilize the platform of the 30S subunit. The protein is Small ribosomal subunit protein bS18 of Syntrophus aciditrophicus (strain SB).